A 221-amino-acid polypeptide reads, in one-letter code: Thymidylate kinase (221 aa).

Gly-10–Thr-17 is an ATP binding site.

It belongs to the thymidylate kinase family.

The catalysed reaction is dTMP + ATP = dTDP + ADP. Its function is as follows. Phosphorylation of dTMP to form dTDP in both de novo and salvage pathways of dTTP synthesis. The chain is Thymidylate kinase from Desulforudis audaxviator (strain MP104C).